A 268-amino-acid chain; its full sequence is MHPPAPDAPILFFDSGLGGLSVLGPTRALLPTAPIVYAADYAGLPYGRKSNEELAARVPALLGRLVERYQPRLAVIACNTASTIALGHVRAALDLPIVGTVPAIKPAAEMTKSGVIGVLGTEATVRQPYVDDLSARFAGGKTVLRHGSPGLVTGAEARLRGETVDPEVIARAVAGLRDQPRGDAIDVVVLACTHFPLLKDELQAGFGRGVALIDGAEGIARRIAHLTDGQAWPAIAVPGIAVFTRSDERPPPPLAVLAPYGIGSIETV.

Residues 14–15 (DS) and 46–47 (YG) contribute to the substrate site. Cys-78 serves as the catalytic Proton donor/acceptor. 79 to 80 (NT) contacts substrate. The active-site Proton donor/acceptor is Cys-192. 193–194 (TH) provides a ligand contact to substrate.

Belongs to the aspartate/glutamate racemases family.

It carries out the reaction L-glutamate = D-glutamate. Its pathway is cell wall biogenesis; peptidoglycan biosynthesis. Provides the (R)-glutamate required for cell wall biosynthesis. The chain is Glutamate racemase from Sphingopyxis alaskensis (strain DSM 13593 / LMG 18877 / RB2256) (Sphingomonas alaskensis).